Here is a 367-residue protein sequence, read N- to C-terminus: Probable butyrate kinase (367 aa).

The protein belongs to the acetokinase family.

It is found in the cytoplasm. It catalyses the reaction butanoate + ATP = butanoyl phosphate + ADP. The polypeptide is Probable butyrate kinase (Bacillus cereus (strain ZK / E33L)).